Here is a 378-residue protein sequence, read N- to C-terminus: Homoserine O-acetyltransferase (378 aa).

The region spanning asparagine 52 to leucine 337 is the AB hydrolase-1 domain. Serine 148 serves as the catalytic Nucleophile. Substrate is bound at residue arginine 217. Active-site residues include aspartate 304 and histidine 333. A substrate-binding site is contributed by aspartate 334.

Belongs to the AB hydrolase superfamily. MetX family. Homodimer.

Its subcellular location is the cytoplasm. It catalyses the reaction L-homoserine + acetyl-CoA = O-acetyl-L-homoserine + CoA. It functions in the pathway amino-acid biosynthesis; L-methionine biosynthesis via de novo pathway; O-acetyl-L-homoserine from L-homoserine: step 1/1. Functionally, transfers an acetyl group from acetyl-CoA to L-homoserine, forming acetyl-L-homoserine. This Chloroherpeton thalassium (strain ATCC 35110 / GB-78) protein is Homoserine O-acetyltransferase.